Here is a 397-residue protein sequence, read N- to C-terminus: Homocysteine-responsive endoplasmic reticulum-resident ubiquitin-like domain member 2 protein (397 aa).

Positions 10 to 89 (VTLVIKAPNQ…HMVHLVCASR (80 aa)) constitute a Ubiquitin-like domain. 2 disordered regions span residues 87-166 (ASRS…MQGG) and 210-246 (APSP…PANP). Low complexity-rich tracts occupy residues 88 to 123 (SRSP…STPS) and 210 to 220 (APSPSLSAGPA). Residues 293–313 (FVMVIGAMLLVYLHQAGWFPF) traverse the membrane as a helical segment. The segment at 344–373 (DEGIEDDEGDSGEEGPDDPMNPGPHQPGFL) is disordered. Residues 345–360 (EGIEDDEGDSGEEGPD) are compositionally biased toward acidic residues.

The protein resides in the membrane. Its function is as follows. Could be involved in the unfolded protein response (UPR) pathway. This Danio rerio (Zebrafish) protein is Homocysteine-responsive endoplasmic reticulum-resident ubiquitin-like domain member 2 protein (herpud2).